The sequence spans 379 residues: Cytochrome b (379 aa).

4 helical membrane-spanning segments follow: residues 33–53, 77–98, 113–133, and 178–198; these read FGSLLGLCLISQILTGLFLAM, WLIRNLHANGASFFFICLYLHI, WNIGVVLFLLVMMTAFVGYVL, and FFAFHFLFPFVVAGATMLHLL. Heme b-binding residues include histidine 83 and histidine 97. 2 residues coordinate heme b: histidine 182 and histidine 196. Residue histidine 201 coordinates a ubiquinone. 4 helical membrane-spanning segments follow: residues 226–246, 288–308, 320–340, and 347–367; these read YKDLLGFIIMLTALTMLALFY, LGGVLALLSSILVLMVVPILH, ISQLLFWILVADMLVLTWIGG, and YIIIGQVASVLYFSLFLVLNP.

This sequence belongs to the cytochrome b family. In terms of assembly, the cytochrome bc1 complex contains 3 respiratory subunits (MT-CYB, CYC1 and UQCRFS1), 2 core proteins (UQCRC1 and UQCRC2) and probably 6 low-molecular weight proteins. It depends on heme b as a cofactor.

It localises to the mitochondrion inner membrane. Functionally, component of the ubiquinol-cytochrome c reductase complex (complex III or cytochrome b-c1 complex) that is part of the mitochondrial respiratory chain. The b-c1 complex mediates electron transfer from ubiquinol to cytochrome c. Contributes to the generation of a proton gradient across the mitochondrial membrane that is then used for ATP synthesis. This is Cytochrome b (mt-cyb) from Anguilla mossambica (African longfin eel).